The primary structure comprises 282 residues: Para-Rep C1 (282 aa).

Positions 1–99 (MASKRWCFTL…ETLISEIGAP (99 aa)) constitute a CRESS-DNA virus Rep endonuclease domain. Residues 7 to 10 (CFTL) carry the RCR-1 motif. Residues Glu38 and His47 each coordinate a divalent metal cation. Positions 47-49 (HLQ) match the RCR-2 motif. Positions 56–77 (KMIRLGGLKKKFGYRAHWEIAK) match the Nuclear localization signal motif. Tyr86 (for DNA cleavage activity) is an active-site residue. The RCR-3 motif lies at 86 to 89 (YCTK). An a divalent metal cation-binding site is contributed by Ser94. 174–182 (GSDGGEGKS) contributes to the ATP binding site.

This sequence belongs to the nanoviridea/circoviridae replication-associated protein family. Homooligomer (Potential). Rep binds to repeated DNA motifs (iterons). Mg(2+) is required as a cofactor. Mn(2+) serves as cofactor.

It is found in the host nucleus. The catalysed reaction is ATP + H2O = ADP + phosphate + H(+). Functionally, initiates and terminates the replication only of its own subviral DNA molecule. The closed circular ssDNA genome is first converted to a superhelical dsDNA. Rep binds a specific hairpin at the genome origin of replication. Introduces an endonucleolytic nick within the intergenic region of the genome, thereby initiating the rolling circle replication (RCR). Following cleavage, binds covalently to the 5'-phosphate of DNA as a tyrosyl ester. The cleavage gives rise to a free 3'-OH that serves as a primer for the cellular DNA polymerase. The polymerase synthesizes the (+) strand DNA by rolling circle mechanism. After one round of replication, a Rep-catalyzed nucleotidyl transfer reaction releases a circular single-stranded virus genome, thereby terminating the replication. Displays origin-specific DNA cleavage, nucleotidyl transferase, ATPase and helicase activities. The protein is Para-Rep C1 (C1) of Faba bean necrotic yellows C11 alphasatellite (FBNYC11A).